Here is a 235-residue protein sequence, read N- to C-terminus: NifU-like protein 2, chloroplastic (235 aa).

The N-terminal 16 residues, 1 to 16 (MQLLTLNPAAISRTPP), are a transit peptide targeting the chloroplast.

The protein belongs to the NifU family. As to quaternary structure, homodimer; disulfide-linked. The cofactor is [2Fe-2S] cluster. As to expression, predominantly expressed in leaves and floral stalks. Ubiquitous (at protein level).

The protein localises to the plastid. The protein resides in the chloroplast stroma. Its function is as follows. Molecular scaffold for [Fe-S] cluster assembly of chloroplastic iron-sulfur proteins. Required for biogenesis of ferredoxin, a major photosynthetic electron carrier containing [2Fe-2S] cluster. Required for the assembly of photosystem I complex. This is NifU-like protein 2, chloroplastic (NIFU2) from Arabidopsis thaliana (Mouse-ear cress).